Reading from the N-terminus, the 378-residue chain is Homeobox protein Meis3 (378 aa).

A disordered region spans residues 24-57; that stretch reads FSEAAPSVPRAPGPYTPHRPPQLQAPGLDSDSLK. Residues 32–43 show a composition bias toward pro residues; that stretch reads PRAPGPYTPHRP. Residues 99–182 enclose the MEIS N-terminal domain; the sequence is GGDVCSSDSF…PIDLVIEDRD (84 aa). The segment at 203–265 is disordered; the sequence is NTTWIRDHED…DEDLDLERRR (63 aa). The span at 230–244 shows a compositional bias: low complexity; it reads SQSGDNSSDQGDGLD. The homeobox; TALE-type DNA-binding region spans 265–327; sequence RNKKRGIFPK…NARRRIVQPM (63 aa).

It belongs to the TALE/MEIS homeobox family. In terms of tissue distribution, expressed at high levels in the brain. Significant expression also observed in the heart, spleen and lung. Expressed in pancreatic islets (beta-cells and non-beta-cells).

Its subcellular location is the nucleus. Functionally, transcriptional regulator which directly modulates PDPK1 expression, thus promoting survival of pancreatic beta-cells. Also regulates expression of NDFIP1, BNIP3, and CCNG1. The protein is Homeobox protein Meis3 (Meis3) of Mus musculus (Mouse).